The following is a 534-amino-acid chain: Zinc finger protein 671 (534 aa).

The 72-residue stretch at 49–120 folds into the KRAB domain; sequence VVFEDVFVYF…DQVDMTSATE (72 aa). A C2H2-type 1; degenerate zinc finger spans residues 192-214; the sequence is YLCGACGKQFWFSTDFDQHQNQP. C2H2-type zinc fingers lie at residues 285–307, 313–335, 341–363, 369–391, 397–419, 425–447, 451–473, 479–501, and 507–529; these read HRCGECGKAFTRKDTLARHQRIH, YECNECGKFFSQSYDLFKHQTVH, YECSECGKFFRQISGLIEHRRVH, YQCGKCGKFFSSKSNLIRHQEVH, YVCSECGKEFSRKHTLVLHQRTH, YECSECGKAFSQSSHLNVHWRIH, YECSRCGKAFSCISKLIQHQKVH, YECSKCGKAFTQRPNLIRHWKVH, and YVCSECGREFIRKQTLVLHQRVH.

The protein belongs to the krueppel C2H2-type zinc-finger protein family.

It localises to the nucleus. In terms of biological role, may be involved in transcriptional regulation. The chain is Zinc finger protein 671 (ZNF671) from Homo sapiens (Human).